The following is a 540-amino-acid chain: uncharacterized protein (540 aa).

Residues 1–58 constitute a chloroplast transit peptide; that stretch reads MAVSAFRGTRLPLFHHSQFPVARTVSGTSKKMIGARNFKGFVLTAQYSQTQDLFTSRL. Residues 195 to 533 form the Protein kinase domain; it reads YVDPTPIASA…ISIASNKRTN (339 aa). ATP is bound by residues 201 to 209 and K224; that span reads IASASIAQV. D362 serves as the catalytic Proton acceptor.

It belongs to the protein kinase superfamily. ADCK protein kinase family.

Its subcellular location is the plastid. The protein resides in the chloroplast. It localises to the plastoglobule. This is an uncharacterized protein from Arabidopsis thaliana (Mouse-ear cress).